The primary structure comprises 442 residues: Proline--tRNA ligase (442 aa).

The protein belongs to the class-II aminoacyl-tRNA synthetase family. ProS type 2 subfamily. As to quaternary structure, homodimer.

The protein localises to the cytoplasm. The enzyme catalyses tRNA(Pro) + L-proline + ATP = L-prolyl-tRNA(Pro) + AMP + diphosphate. Its function is as follows. Catalyzes the attachment of proline to tRNA(Pro) in a two-step reaction: proline is first activated by ATP to form Pro-AMP and then transferred to the acceptor end of tRNA(Pro). The protein is Proline--tRNA ligase of Brucella canis (strain ATCC 23365 / NCTC 10854 / RM-666).